A 332-amino-acid polypeptide reads, in one-letter code: NAD-dependent protein deacetylase hst2 (332 aa).

The 263-residue stretch at 7–269 folds into the Deacetylase sirtuin-type domain; sequence KHVDSSKHLE…RALCKLLGWS (263 aa). Residues 35-55 and 118-121 each bind NAD(+); these read GAGI…TGIY and QNID. Histidine 138 (proton acceptor) is an active-site residue. Positions 146, 149, 170, and 173 each coordinate Zn(2+). NAD(+) is bound by residues 210–212, 235–237, and cysteine 255; these read GTS and NRE.

It belongs to the sirtuin family. Class I subfamily. Requires Zn(2+) as cofactor.

Its subcellular location is the cytoplasm. The protein localises to the nucleus. It catalyses the reaction N(6)-acetyl-L-lysyl-[protein] + NAD(+) + H2O = 2''-O-acetyl-ADP-D-ribose + nicotinamide + L-lysyl-[protein]. Its function is as follows. NAD-dependent histone deacetylase, which could function in telomeric silencing, cell cycle progression and chromosome stability. The protein is NAD-dependent protein deacetylase hst2 (hst2) of Schizosaccharomyces pombe (strain 972 / ATCC 24843) (Fission yeast).